Reading from the N-terminus, the 241-residue chain is Uridylate kinase (241 aa).

14–17 (KLSG) provides a ligand contact to ATP. G56 is a binding site for UMP. ATP contacts are provided by G57 and R61. Residues D77 and 138–145 (TGNPFFTT) contribute to the UMP site. ATP is bound by residues T165, Y171, and D174.

This sequence belongs to the UMP kinase family. In terms of assembly, homohexamer.

The protein resides in the cytoplasm. It carries out the reaction UMP + ATP = UDP + ADP. The protein operates within pyrimidine metabolism; CTP biosynthesis via de novo pathway; UDP from UMP (UMPK route): step 1/1. With respect to regulation, inhibited by UTP. In terms of biological role, catalyzes the reversible phosphorylation of UMP to UDP. This is Uridylate kinase from Psychrobacter arcticus (strain DSM 17307 / VKM B-2377 / 273-4).